Here is a 430-residue protein sequence, read N- to C-terminus: L-lysine N6-monooxygenase MbtG (430 aa).

The N-terminal stretch at 1–21 is a signal peptide; the sequence is MTATLAVIGAGPKAVAVAAKA.

Belongs to the lysine N(6)-hydroxylase/L-ornithine N(5)-oxygenase family. Requires FAD as cofactor.

It carries out the reaction L-lysine + NADPH + O2 = N(6)-hydroxy-L-lysine + NADP(+) + H2O. It functions in the pathway siderophore biosynthesis; mycobactin biosynthesis. Its function is as follows. Flavoprotein monooxygenase required for N-hydroxylation of the two acylated lysine residues during mycobactin assembly, thus producing the hydroxamate groups necessary for iron sequestration. Is also able, but less efficiently, to hydroxylate L-lysine (non acylated) in vitro. This is L-lysine N6-monooxygenase MbtG (mbtG) from Mycobacterium sp. (strain MCS).